Reading from the N-terminus, the 96-residue chain is Small ribosomal subunit protein bS6 (96 aa).

This sequence belongs to the bacterial ribosomal protein bS6 family.

Its function is as follows. Binds together with bS18 to 16S ribosomal RNA. This chain is Small ribosomal subunit protein bS6, found in Streptococcus mutans serotype c (strain ATCC 700610 / UA159).